The primary structure comprises 356 residues: Nuclear hormone receptor family member nhr-169 (356 aa).

The segment at residues 16–90 (DPICSVCNFS…AGMKRSLVKE (75 aa)) is a DNA-binding region (nuclear receptor). 2 NR C4-type zinc fingers span residues 19–40 (CSVCNFSSLIAPHFGGLVCSAC) and 56–72 (CKKDNQCKGMRKNCRAC). Residues 144 to 356 (DVSKILKTTP…KLYLHMGLPF (213 aa)) form the NR LBD domain.

This sequence belongs to the nuclear hormone receptor family.

It localises to the nucleus. Functionally, orphan nuclear receptor. The sequence is that of Nuclear hormone receptor family member nhr-169 (nhr-169) from Caenorhabditis elegans.